We begin with the raw amino-acid sequence, 888 residues long: Microtubule-associated protein 10 (888 aa).

5 disordered regions span residues 398–454 (EHKG…VTKG), 508–602 (SLAA…TSLR), 620–642 (NILRGKWKKQVQSPGLSRQDPAV), 654–683 (QVKAASAADTNENRPPSRKSSCESTSELQC), and 699–836 (TENN…YEPS). A compositionally biased stretch (polar residues) spans 524-541 (LTDSNGKVSSWAVQSQLP). Positions 572–589 (ESSRTREAKQSHAMKKET) are enriched in basic and acidic residues. The span at 590-600 (VGQSENKTVTS) shows a compositional bias: polar residues. 5 stretches are compositionally biased toward polar residues: residues 661 to 683 (ADTNENRPPSRKSSCESTSELQC), 699 to 714 (TENNSRSLPAPDSSTG), 722 to 745 (SWASKSSEARLSTRKNSSESSSVF), 772 to 786 (EASSLSTSDFSSQWT), and 825 to 836 (ARTSQVSSYEPS).

In terms of assembly, interacts (via middle region) with microtubules.

The protein localises to the cytoplasm. Its subcellular location is the cytoskeleton. It localises to the spindle pole. It is found in the microtubule organizing center. The protein resides in the centrosome. The protein localises to the midbody. Microtubule-associated protein (MAP) that plays a role in the regulation of cell division; promotes microtubule stability and participates in the organization of the spindle midzone and normal progress of cytokinesis. The protein is Microtubule-associated protein 10 (Map10) of Rattus norvegicus (Rat).